The following is a 317-amino-acid chain: Acetyl-coenzyme A carboxylase carboxyl transferase subunit alpha (317 aa).

Positions 40–294 constitute a CoA carboxyltransferase C-terminal domain; it reads RLQHKSQELT…KQQILADLAE (255 aa).

Belongs to the AccA family. In terms of assembly, acetyl-CoA carboxylase is a heterohexamer composed of biotin carboxyl carrier protein (AccB), biotin carboxylase (AccC) and two subunits each of ACCase subunit alpha (AccA) and ACCase subunit beta (AccD).

It is found in the cytoplasm. The catalysed reaction is N(6)-carboxybiotinyl-L-lysyl-[protein] + acetyl-CoA = N(6)-biotinyl-L-lysyl-[protein] + malonyl-CoA. It functions in the pathway lipid metabolism; malonyl-CoA biosynthesis; malonyl-CoA from acetyl-CoA: step 1/1. Component of the acetyl coenzyme A carboxylase (ACC) complex. First, biotin carboxylase catalyzes the carboxylation of biotin on its carrier protein (BCCP) and then the CO(2) group is transferred by the carboxyltransferase to acetyl-CoA to form malonyl-CoA. The polypeptide is Acetyl-coenzyme A carboxylase carboxyl transferase subunit alpha (Haemophilus ducreyi (strain 35000HP / ATCC 700724)).